The chain runs to 426 residues: MQLRTNVKHLQGTLMVPSDKSISHRSIMFGAISSGKTTITNFLRGEDCLSTLAAFRSLGVNIEDDGTTITVEGRGFAGLKKAKNTIDVGNSGTTIRLMLGILAGCPFETRLAGDASIAKRPMNRVMLPLNQMGAECQGVQQTEFPPISIRGTQNLQPIDYTMPVASAQVKSAILFAALQAEGTSVVVEKEKTRDHTEEMIRQFGGTLEVDGKKIMLTGPQQLTGQNVVVPGDISSAAFFLVAGLVVPDSEILLKNVGLNQTRTGILDVIKNMGGSVTILNEDEANHSGDLLVKTSQLTATEIGGAIIPRLIDELPIIALLATQATGTTIIRDAEELKVKETNRIDAVAKELTILGADITPTDDGLIIHGPTSLHGGRVTSYGDHRIGMMLQIAALLVKEGTVELDKAEAVSVSYPAFFDDLERLSC.

Lysine 20, serine 21, and arginine 25 together coordinate 3-phosphoshikimate. Phosphoenolpyruvate is bound at residue lysine 20. The phosphoenolpyruvate site is built by glycine 92 and arginine 120. 3-phosphoshikimate-binding residues include serine 166, glutamine 168, aspartate 312, and lysine 339. Glutamine 168 serves as a coordination point for phosphoenolpyruvate. Residue aspartate 312 is the Proton acceptor of the active site. Arginine 343 and arginine 385 together coordinate phosphoenolpyruvate.

The protein belongs to the EPSP synthase family. As to quaternary structure, monomer.

It is found in the cytoplasm. The catalysed reaction is 3-phosphoshikimate + phosphoenolpyruvate = 5-O-(1-carboxyvinyl)-3-phosphoshikimate + phosphate. The protein operates within metabolic intermediate biosynthesis; chorismate biosynthesis; chorismate from D-erythrose 4-phosphate and phosphoenolpyruvate: step 6/7. In terms of biological role, catalyzes the transfer of the enolpyruvyl moiety of phosphoenolpyruvate (PEP) to the 5-hydroxyl of shikimate-3-phosphate (S3P) to produce enolpyruvyl shikimate-3-phosphate and inorganic phosphate. The polypeptide is 3-phosphoshikimate 1-carboxyvinyltransferase (Enterococcus faecalis (strain ATCC 700802 / V583)).